A 311-amino-acid chain; its full sequence is Methionyl-tRNA formyltransferase (311 aa).

Residue 108–111 (SILP) participates in (6S)-5,6,7,8-tetrahydrofolate binding.

This sequence belongs to the Fmt family.

It catalyses the reaction L-methionyl-tRNA(fMet) + (6R)-10-formyltetrahydrofolate = N-formyl-L-methionyl-tRNA(fMet) + (6S)-5,6,7,8-tetrahydrofolate + H(+). Functionally, attaches a formyl group to the free amino group of methionyl-tRNA(fMet). The formyl group appears to play a dual role in the initiator identity of N-formylmethionyl-tRNA by promoting its recognition by IF2 and preventing the misappropriation of this tRNA by the elongation apparatus. The sequence is that of Methionyl-tRNA formyltransferase from Sorangium cellulosum (strain So ce56) (Polyangium cellulosum (strain So ce56)).